The primary structure comprises 86 residues: Exodeoxyribonuclease 7 small subunit (86 aa).

Residues Met-1–Ser-26 form a disordered region.

It belongs to the XseB family. Heterooligomer composed of large and small subunits.

It localises to the cytoplasm. It carries out the reaction Exonucleolytic cleavage in either 5'- to 3'- or 3'- to 5'-direction to yield nucleoside 5'-phosphates.. Its function is as follows. Bidirectionally degrades single-stranded DNA into large acid-insoluble oligonucleotides, which are then degraded further into small acid-soluble oligonucleotides. The polypeptide is Exodeoxyribonuclease 7 small subunit (Helicobacter pylori (strain Shi470)).